A 372-amino-acid chain; its full sequence is tRNA 2-selenouridine synthase (372 aa).

Positions 17 to 140 constitute a Rhodanese domain; sequence FLQDIPLIDV…LRNFLLTTLE (124 aa). Cysteine 100 functions as the S-selanylcysteine intermediate in the catalytic mechanism.

This sequence belongs to the SelU family. In terms of assembly, monomer.

It carries out the reaction 5-methylaminomethyl-2-thiouridine(34) in tRNA + selenophosphate + (2E)-geranyl diphosphate + H2O + H(+) = 5-methylaminomethyl-2-selenouridine(34) in tRNA + (2E)-thiogeraniol + phosphate + diphosphate. The enzyme catalyses 5-methylaminomethyl-2-thiouridine(34) in tRNA + (2E)-geranyl diphosphate = 5-methylaminomethyl-S-(2E)-geranyl-thiouridine(34) in tRNA + diphosphate. It catalyses the reaction 5-methylaminomethyl-S-(2E)-geranyl-thiouridine(34) in tRNA + selenophosphate + H(+) = 5-methylaminomethyl-2-(Se-phospho)selenouridine(34) in tRNA + (2E)-thiogeraniol. The catalysed reaction is 5-methylaminomethyl-2-(Se-phospho)selenouridine(34) in tRNA + H2O = 5-methylaminomethyl-2-selenouridine(34) in tRNA + phosphate. In terms of biological role, involved in the post-transcriptional modification of the uridine at the wobble position (U34) of tRNA(Lys), tRNA(Glu) and tRNA(Gln). Catalyzes the conversion of 2-thiouridine (S2U-RNA) to 2-selenouridine (Se2U-RNA). Acts in a two-step process involving geranylation of 2-thiouridine (S2U) to S-geranyl-2-thiouridine (geS2U) and subsequent selenation of the latter derivative to 2-selenouridine (Se2U) in the tRNA chain. The polypeptide is tRNA 2-selenouridine synthase (Serratia proteamaculans (strain 568)).